The sequence spans 354 residues: S-adenosylmethionine:tRNA ribosyltransferase-isomerase (354 aa).

This sequence belongs to the QueA family. As to quaternary structure, monomer.

It is found in the cytoplasm. It catalyses the reaction 7-aminomethyl-7-carbaguanosine(34) in tRNA + S-adenosyl-L-methionine = epoxyqueuosine(34) in tRNA + adenine + L-methionine + 2 H(+). The protein operates within tRNA modification; tRNA-queuosine biosynthesis. Transfers and isomerizes the ribose moiety from AdoMet to the 7-aminomethyl group of 7-deazaguanine (preQ1-tRNA) to give epoxyqueuosine (oQ-tRNA). The chain is S-adenosylmethionine:tRNA ribosyltransferase-isomerase from Pseudomonas syringae pv. tomato (strain ATCC BAA-871 / DC3000).